Consider the following 558-residue polypeptide: Ubiquitin carboxyl-terminal hydrolase 30 homolog (558 aa).

Residues 6-26 traverse the membrane as a helical segment; the sequence is ILMAAGVTVAAVVGAFVFWGP. Positions 39-550 constitute a USP domain; the sequence is AGLHNFGLTC…PAYLLFYDRG (512 aa). Catalysis depends on C48, which acts as the Nucleophile. Positions 267-300 are disordered; sequence LATPMLGGERSSRPRLPQSQQQQDEGLNRRVSSS. The segment covering 280–289 has biased composition (low complexity); it reads PRLPQSQQQQ. H506 functions as the Proton acceptor in the catalytic mechanism.

Belongs to the peptidase C19 family.

It is found in the mitochondrion outer membrane. The catalysed reaction is Thiol-dependent hydrolysis of ester, thioester, amide, peptide and isopeptide bonds formed by the C-terminal Gly of ubiquitin (a 76-residue protein attached to proteins as an intracellular targeting signal).. Functionally, deubiquitinating enzyme that acts as a key inhibitor of mitophagy by counteracting the action of parkin (park). This is Ubiquitin carboxyl-terminal hydrolase 30 homolog from Drosophila melanogaster (Fruit fly).